The following is a 237-amino-acid chain: Uridylate kinase (237 aa).

11 to 14 contributes to the ATP binding site; sequence KLSG. Residue Gly-53 participates in UMP binding. Positions 54 and 58 each coordinate ATP. UMP is bound by residues Asp-73 and 134 to 141; that span reads TGNPFFTT. 3 residues coordinate ATP: Thr-161, Tyr-167, and Asp-170.

This sequence belongs to the UMP kinase family. Homohexamer.

The protein localises to the cytoplasm. It carries out the reaction UMP + ATP = UDP + ADP. It functions in the pathway pyrimidine metabolism; CTP biosynthesis via de novo pathway; UDP from UMP (UMPK route): step 1/1. With respect to regulation, inhibited by UTP. Functionally, catalyzes the reversible phosphorylation of UMP to UDP. The sequence is that of Uridylate kinase from Burkholderia mallei (strain NCTC 10247).